The sequence spans 591 residues: Proteasome-associated ATPase (591 aa).

Residues 10-77 (VAAAEELHAL…LREEVDRLGQ (68 aa)) adopt a coiled-coil conformation. ATP is bound at residue 278–283 (GCGKTL). Positions 590–591 (YL) are docks into pockets in the proteasome alpha-ring.

Belongs to the AAA ATPase family. As to quaternary structure, homohexamer. Assembles into a hexameric ring structure that likely caps the 20S proteasome core. Can form a complex composed of two stacked hexameric rings in vitro. Probably interacts with the prokaryotic ubiquitin-like protein Pup through a hydrophobic interface; the expected interacting region of ARC lies in its N-terminal coiled-coil domain. There is likely one Pup binding site per ARC hexamer ring. Upon ATP-binding, the C-terminus of ARC probably interacts with the alpha-rings of the proteasome core, possibly by binding to the intersubunit pockets.

Its pathway is protein degradation; proteasomal Pup-dependent pathway. Its activity is regulated as follows. ATPase activity is inhibited by N-ethylmaleimide (NEM) but not by sodium azide. In terms of biological role, ATPase which is responsible for recognizing, binding, unfolding and translocation of pupylated proteins into the bacterial 20S proteasome core particle. May be essential for opening the gate of the 20S proteasome via an interaction with its C-terminus, thereby allowing substrate entry and access to the site of proteolysis. Thus, the C-termini of the proteasomal ATPase may function like a 'key in a lock' to induce gate opening and therefore regulate proteolysis. This is Proteasome-associated ATPase from Rhodococcus erythropolis (Arthrobacter picolinophilus).